Here is a 68-residue protein sequence, read N- to C-terminus: DNA gyrase inhibitor YacG (68 aa).

Zn(2+)-binding residues include Cys12, Cys15, Cys30, and Cys34. The disordered stretch occupies residues 48–68; sequence KLKTQDAPTSGKGQHSDDYED.

It belongs to the DNA gyrase inhibitor YacG family. Interacts with GyrB. Zn(2+) serves as cofactor.

Functionally, inhibits all the catalytic activities of DNA gyrase by preventing its interaction with DNA. Acts by binding directly to the C-terminal domain of GyrB, which probably disrupts DNA binding by the gyrase. The protein is DNA gyrase inhibitor YacG of Acinetobacter baylyi (strain ATCC 33305 / BD413 / ADP1).